Consider the following 307-residue polypeptide: tRNA dimethylallyltransferase (307 aa).

ATP is bound at residue 10 to 17 (GPTAVGKT). 12–17 (TAVGKT) lines the substrate pocket. An interaction with substrate tRNA region spans residues 35–38 (DSMQ).

The protein belongs to the IPP transferase family. Monomer. Mg(2+) is required as a cofactor.

The catalysed reaction is adenosine(37) in tRNA + dimethylallyl diphosphate = N(6)-dimethylallyladenosine(37) in tRNA + diphosphate. Functionally, catalyzes the transfer of a dimethylallyl group onto the adenine at position 37 in tRNAs that read codons beginning with uridine, leading to the formation of N6-(dimethylallyl)adenosine (i(6)A). This is tRNA dimethylallyltransferase from Ligilactobacillus salivarius (strain UCC118) (Lactobacillus salivarius).